The following is a 385-amino-acid chain: Cytochrome b (385 aa).

4 helical membrane-spanning segments follow: residues 32-52 (MGSL…FMAM), 76-98 (WLLR…MHMA), 113-133 (VWII…LGYC), and 179-199 (FFAL…MHFM). Residues His-82 and His-96 each contribute to the heme b site. His-183 and His-197 together coordinate heme b. Residue His-202 participates in a ubiquinone binding. Transmembrane regions (helical) follow at residues 225–245 (FIFK…LFVF), 289–309 (LLGV…PLTD), 321–341 (ISKL…VLGS), and 348–368 (FVQM…IFVP).

The protein belongs to the cytochrome b family. As to quaternary structure, fungal cytochrome b-c1 complex contains 10 subunits; 3 respiratory subunits, 2 core proteins and 5 low-molecular weight proteins. Cytochrome b-c1 complex is a homodimer. The cofactor is heme b.

Its subcellular location is the mitochondrion inner membrane. Functionally, component of the ubiquinol-cytochrome c reductase complex (complex III or cytochrome b-c1 complex) that is part of the mitochondrial respiratory chain. The b-c1 complex mediates electron transfer from ubiquinol to cytochrome c. Contributes to the generation of a proton gradient across the mitochondrial membrane that is then used for ATP synthesis. In Monosporozyma servazzii (Yeast), this protein is Cytochrome b (COB).